A 108-amino-acid polypeptide reads, in one-letter code: Competence protein ComGC (108 aa).

The first 13 residues, 1–13 (MKKMMTFLKKAKV), serve as a signal peptide directing secretion. The segment at 14-39 (KAFTLVEMLVVLLIISVLFLLFVPNL) is may be involved in polymerization of ComGC. F16 is subject to N-methylphenylalanine. The helical transmembrane segment at 16–36 (FTLVEMLVVLLIISVLFLLFV) threads the bilayer.

It belongs to the ComGC family. In terms of assembly, the transformation pili are flexible filaments, consisting mainly of the major pilin ComGC and smaller amounts of the minor pilins, including at least ComGD, ComGF and ComGG, and perhaps ComGE. Homodimer. Forms higher-order multimers. Interacts with ComGG; the interaction is probably direct. Undergoes proteolytic cleavage.

Its subcellular location is the cell membrane. It localises to the cell surface. It is found in the fimbrium. The protein resides in the secreted. In terms of biological role, major component of the type IV-like pilus (T4P) that plays a role in transformation. Transformation pili are dynamically extended and retracted, perhaps thereby promoting DNA uptake and transformation. Required for transformation. Required for DNA binding. In Streptococcus pneumoniae serotype 4 (strain ATCC BAA-334 / TIGR4), this protein is Competence protein ComGC.